A 142-amino-acid chain; its full sequence is Nucleoside diphosphate kinase (142 aa).

ATP contacts are provided by Lys11, Phe59, Arg87, Thr93, Arg104, and Asn114. His117 functions as the Pros-phosphohistidine intermediate in the catalytic mechanism.

It belongs to the NDK family. As to quaternary structure, homotetramer. Requires Mg(2+) as cofactor.

The protein resides in the cytoplasm. The enzyme catalyses a 2'-deoxyribonucleoside 5'-diphosphate + ATP = a 2'-deoxyribonucleoside 5'-triphosphate + ADP. It catalyses the reaction a ribonucleoside 5'-diphosphate + ATP = a ribonucleoside 5'-triphosphate + ADP. In terms of biological role, major role in the synthesis of nucleoside triphosphates other than ATP. The ATP gamma phosphate is transferred to the NDP beta phosphate via a ping-pong mechanism, using a phosphorylated active-site intermediate. This Salinibacter ruber (strain DSM 13855 / M31) protein is Nucleoside diphosphate kinase.